Reading from the N-terminus, the 440-residue chain is ATP-dependent protease ATPase subunit HslU (440 aa).

Residues Ile-18, Gly-60–Glu-65, Asp-252, Glu-318, and Arg-390 each bind ATP.

It belongs to the ClpX chaperone family. HslU subfamily. A double ring-shaped homohexamer of HslV is capped on each side by a ring-shaped HslU homohexamer. The assembly of the HslU/HslV complex is dependent on binding of ATP.

It localises to the cytoplasm. Its function is as follows. ATPase subunit of a proteasome-like degradation complex; this subunit has chaperone activity. The binding of ATP and its subsequent hydrolysis by HslU are essential for unfolding of protein substrates subsequently hydrolyzed by HslV. HslU recognizes the N-terminal part of its protein substrates and unfolds these before they are guided to HslV for hydrolysis. The chain is ATP-dependent protease ATPase subunit HslU from Acidithiobacillus ferrooxidans (strain ATCC 23270 / DSM 14882 / CIP 104768 / NCIMB 8455) (Ferrobacillus ferrooxidans (strain ATCC 23270)).